Here is a 367-residue protein sequence, read N- to C-terminus: tRNA-specific 2-thiouridylase MnmA (367 aa).

ATP is bound by residues 6–13 (AMSGGVDS) and methionine 32. The Nucleophile role is filled by cysteine 101. Cysteine 101 and cysteine 193 are oxidised to a cystine. Residue glycine 125 participates in ATP binding. Positions 143-145 (KDQ) are interaction with tRNA. Cysteine 193 serves as the catalytic Cysteine persulfide intermediate.

This sequence belongs to the MnmA/TRMU family.

Its subcellular location is the cytoplasm. It carries out the reaction S-sulfanyl-L-cysteinyl-[protein] + uridine(34) in tRNA + AH2 + ATP = 2-thiouridine(34) in tRNA + L-cysteinyl-[protein] + A + AMP + diphosphate + H(+). Its function is as follows. Catalyzes the 2-thiolation of uridine at the wobble position (U34) of tRNA, leading to the formation of s(2)U34. The sequence is that of tRNA-specific 2-thiouridylase MnmA from Mycobacterium tuberculosis (strain CDC 1551 / Oshkosh).